The following is a 266-amino-acid chain: Hydroxymethylpyrimidine/phosphomethylpyrimidine kinase (266 aa).

Gln-44 contacts 4-amino-5-hydroxymethyl-2-methylpyrimidine.

Belongs to the ThiD family. As to quaternary structure, homodimer.

The catalysed reaction is 4-amino-5-hydroxymethyl-2-methylpyrimidine + ATP = 4-amino-2-methyl-5-(phosphooxymethyl)pyrimidine + ADP + H(+). The enzyme catalyses 4-amino-2-methyl-5-(phosphooxymethyl)pyrimidine + ATP = 4-amino-2-methyl-5-(diphosphooxymethyl)pyrimidine + ADP. It participates in cofactor biosynthesis; thiamine diphosphate biosynthesis; 4-amino-2-methyl-5-diphosphomethylpyrimidine from 5-amino-1-(5-phospho-D-ribosyl)imidazole: step 2/3. The protein operates within cofactor biosynthesis; thiamine diphosphate biosynthesis; 4-amino-2-methyl-5-diphosphomethylpyrimidine from 5-amino-1-(5-phospho-D-ribosyl)imidazole: step 3/3. Its function is as follows. Catalyzes the phosphorylation of hydroxymethylpyrimidine phosphate (HMP-P) to HMP-PP, and of HMP to HMP-P. This chain is Hydroxymethylpyrimidine/phosphomethylpyrimidine kinase (thiD), found in Salmonella typhimurium (strain LT2 / SGSC1412 / ATCC 700720).